A 401-amino-acid polypeptide reads, in one-letter code: UDP-N-acetylglucosamine--N-acetylmuramyl-(pentapeptide) pyrophosphoryl-undecaprenol N-acetylglucosamine transferase (401 aa).

The tract at residues 1-24 (MTRISVPAGQERNDGGISVPAGQE) is disordered. Residues 39–41 (TAG), Asn157, Arg194, Ser228, and Gln324 each bind UDP-N-acetyl-alpha-D-glucosamine.

It belongs to the glycosyltransferase 28 family. MurG subfamily.

The protein localises to the cell membrane. The catalysed reaction is di-trans,octa-cis-undecaprenyl diphospho-N-acetyl-alpha-D-muramoyl-L-alanyl-D-glutamyl-meso-2,6-diaminopimeloyl-D-alanyl-D-alanine + UDP-N-acetyl-alpha-D-glucosamine = di-trans,octa-cis-undecaprenyl diphospho-[N-acetyl-alpha-D-glucosaminyl-(1-&gt;4)]-N-acetyl-alpha-D-muramoyl-L-alanyl-D-glutamyl-meso-2,6-diaminopimeloyl-D-alanyl-D-alanine + UDP + H(+). The protein operates within cell wall biogenesis; peptidoglycan biosynthesis. Its function is as follows. Cell wall formation. Catalyzes the transfer of a GlcNAc subunit on undecaprenyl-pyrophosphoryl-MurNAc-pentapeptide (lipid intermediate I) to form undecaprenyl-pyrophosphoryl-MurNAc-(pentapeptide)GlcNAc (lipid intermediate II). The protein is UDP-N-acetylglucosamine--N-acetylmuramyl-(pentapeptide) pyrophosphoryl-undecaprenol N-acetylglucosamine transferase of Mycolicibacterium vanbaalenii (strain DSM 7251 / JCM 13017 / BCRC 16820 / KCTC 9966 / NRRL B-24157 / PYR-1) (Mycobacterium vanbaalenii).